The following is a 508-amino-acid chain: Photosystem II CP47 reaction center protein (508 aa).

6 helical membrane passes run 21 to 36 (SVHIMHTALVAGWAGS), 101 to 115 (IVFSGLCFLAAIWHW), 140 to 156 (GIHLFLSGLACFGFGAF), 203 to 218 (IAAGTLGILAGLFHLS), 237 to 252 (VLSSSIAAVFFAAFVV), and 457 to 472 (SFALLFFFGHIWHGAR).

It belongs to the PsbB/PsbC family. PsbB subfamily. As to quaternary structure, PSII is composed of 1 copy each of membrane proteins PsbA, PsbB, PsbC, PsbD, PsbE, PsbF, PsbH, PsbI, PsbJ, PsbK, PsbL, PsbM, PsbT, PsbX, PsbY, PsbZ, Psb30/Ycf12, at least 3 peripheral proteins of the oxygen-evolving complex and a large number of cofactors. It forms dimeric complexes. It depends on Binds multiple chlorophylls. PSII binds additional chlorophylls, carotenoids and specific lipids. as a cofactor.

Its subcellular location is the plastid. It is found in the chloroplast thylakoid membrane. One of the components of the core complex of photosystem II (PSII). It binds chlorophyll and helps catalyze the primary light-induced photochemical processes of PSII. PSII is a light-driven water:plastoquinone oxidoreductase, using light energy to abstract electrons from H(2)O, generating O(2) and a proton gradient subsequently used for ATP formation. The sequence is that of Photosystem II CP47 reaction center protein from Ipomoea purpurea (Common morning glory).